Reading from the N-terminus, the 758-residue chain is 5-methyltetrahydropteroyltriglutamate--homocysteine methyltransferase (758 aa).

Residues R16–K19 and K116 each bind 5-methyltetrahydropteroyltri-L-glutamate. L-homocysteine-binding positions include I436 to S438 and E489. L-methionine is bound by residues I436–S438 and E489. 5-methyltetrahydropteroyltri-L-glutamate-binding positions include R520–C521 and W566. Residue D604 coordinates L-homocysteine. D604 lines the L-methionine pocket. A 5-methyltetrahydropteroyltri-L-glutamate-binding site is contributed by E610. Zn(2+)-binding residues include H646, C648, and E670. H699 (proton donor) is an active-site residue. Position 731 (C731) interacts with Zn(2+).

Belongs to the vitamin-B12 independent methionine synthase family. It depends on Zn(2+) as a cofactor.

The catalysed reaction is 5-methyltetrahydropteroyltri-L-glutamate + L-homocysteine = tetrahydropteroyltri-L-glutamate + L-methionine. The protein operates within amino-acid biosynthesis; L-methionine biosynthesis via de novo pathway; L-methionine from L-homocysteine (MetE route): step 1/1. In terms of biological role, catalyzes the transfer of a methyl group from 5-methyltetrahydrofolate to homocysteine resulting in methionine formation. This is 5-methyltetrahydropteroyltriglutamate--homocysteine methyltransferase from Xylella fastidiosa (strain M23).